Consider the following 192-residue polypeptide: Probable nicotinate-nucleotide adenylyltransferase (192 aa).

This sequence belongs to the NadD family.

It carries out the reaction nicotinate beta-D-ribonucleotide + ATP + H(+) = deamido-NAD(+) + diphosphate. The protein operates within cofactor biosynthesis; NAD(+) biosynthesis; deamido-NAD(+) from nicotinate D-ribonucleotide: step 1/1. Its function is as follows. Catalyzes the reversible adenylation of nicotinate mononucleotide (NaMN) to nicotinic acid adenine dinucleotide (NaAD). The polypeptide is Probable nicotinate-nucleotide adenylyltransferase (Bradyrhizobium sp. (strain BTAi1 / ATCC BAA-1182)).